We begin with the raw amino-acid sequence, 208 residues long: 3-demethoxyubiquinol 3-hydroxylase (208 aa).

6 residues coordinate Fe cation: Glu57, Glu87, His90, Glu139, Glu171, and His174.

Belongs to the COQ7 family. Requires Fe cation as cofactor.

It is found in the cell membrane. The catalysed reaction is a 5-methoxy-2-methyl-3-(all-trans-polyprenyl)benzene-1,4-diol + AH2 + O2 = a 3-demethylubiquinol + A + H2O. Its pathway is cofactor biosynthesis; ubiquinone biosynthesis. Its function is as follows. Catalyzes the hydroxylation of 2-nonaprenyl-3-methyl-6-methoxy-1,4-benzoquinol during ubiquinone biosynthesis. The sequence is that of 3-demethoxyubiquinol 3-hydroxylase from Burkholderia cenocepacia (strain HI2424).